We begin with the raw amino-acid sequence, 463 residues long: L-seryl-tRNA(Sec) selenium transferase (463 aa).

Lys-295 carries the post-translational modification N6-(pyridoxal phosphate)lysine.

Belongs to the SelA family. Homodecamer; pentamer of dimers. Binds only one seryl-tRNA(Sec) per dimer. Pyridoxal 5'-phosphate is required as a cofactor.

It is found in the cytoplasm. The catalysed reaction is L-seryl-tRNA(Sec) + selenophosphate + H(+) = L-selenocysteinyl-tRNA(Sec) + phosphate. It functions in the pathway aminoacyl-tRNA biosynthesis; selenocysteinyl-tRNA(Sec) biosynthesis; selenocysteinyl-tRNA(Sec) from L-seryl-tRNA(Sec) (bacterial route): step 1/1. Its function is as follows. Converts seryl-tRNA(Sec) to selenocysteinyl-tRNA(Sec) required for selenoprotein biosynthesis. The protein is L-seryl-tRNA(Sec) selenium transferase of Escherichia coli (strain SMS-3-5 / SECEC).